The sequence spans 777 residues: MDSKESLTPGKEENPSSVLTQERGNVMDFCKILRGGATLKVSVSSTSLAAASQSDSKQQRLLVDFPKGSVSNAQQPDLSKAVSLSMGLYMGETETKVMGNDLGFPQQGQISLSSGETDLQLLEESIANLNRSTSVPENPKSSASSSVSAAPKEKEFPKTHSDVSSEQQNLKGQTGTNGGNAKLCTADQSTFDILQDLEFSSGSPGKETNQSPWRSDLLIDENCLLSPLAGEEDSFLLEGNSNEDCKPLILPDTKPKIKDNGDLVLSSSSNVTLPQVKTEKEDFIELCTPGVIKQEKLSTVYCQASFPGANIIGNKMSAISIHGVSTSGGQMYHYDMNTASLSQQQDQKPIFNVIPPIPVGSENWNRCQGSGDDNLTSLGTLNFPGRTVFSNGYSSPSMRPDVSSPPSSSSTATTGPPPKLCLVCSDEASGCHYGVLTCGSCKVFFKRAVEGQHNYLCAGRNDCIIDKIRRKNCPACRYRKCLQAGMNLEARKTKKKIKGIQQATTGVSQETSENPANKTIVPATLPQLTPTLVSLLEVIEPEVLYAGYDSTVPDSTWRIMTTLNMLGGRQVIAAVKWAKAIPGFRNLHLDDQMTLLQYSWMFLMAFALGWRSYRQASSNLLCFAPDLIINEQRMTLPCMYDQCKHMLYVSSELHRLQVSYEEYLCMKTLLLLSSVPKDGLKSQELFDEIRMTYIKELGKAIVKREGNSSQNWQRFYQLTKLLDSMHEVVENLLNYCFQTFLDKTMSIEFPEMLAEIITNQLPKYSNGNIRKLLFHQK.

A compositionally biased stretch (basic and acidic residues) spans 1-14 (MDSKESLTPGKEEN). Positions 1 to 22 (MDSKESLTPGKEENPSSVLTQE) are disordered. The interval 1–420 (MDSKESLTPG…TATTGPPPKL (420 aa)) is modulating. A Phosphothreonine modification is found at threonine 8. Arginine 23 carries the omega-N-methylarginine modification. Phosphoserine is present on residues serine 45, serine 113, serine 134, and serine 141. Residues 130–183 (NRSTSVPENPKSSASSSVSAAPKEKEFPKTHSDVSSEQQNLKGQTGTNGGNAKL) form a disordered region. Positions 134–150 (SVPENPKSSASSSVSAA) are enriched in low complexity. The span at 151 to 163 (PKEKEFPKTHSDV) shows a compositional bias: basic and acidic residues. Positions 164 to 174 (SSEQQNLKGQT) are enriched in polar residues. A phosphoserine mark is found at serine 203, serine 211, and serine 226. A Glycyl lysine isopeptide (Lys-Gly) (interchain with G-Cter in SUMO2) cross-link involves residue lysine 258. Serine 267 carries the post-translational modification Phosphoserine. Residues lysine 277 and lysine 293 each participate in a glycyl lysine isopeptide (Lys-Gly) (interchain with G-Cter in SUMO); alternate cross-link. Glycyl lysine isopeptide (Lys-Gly) (interchain with G-Cter in SUMO2); alternate cross-links involve residues lysine 277 and lysine 293. Positions 394-414 (SSPSMRPDVSSPPSSSSTATT) are enriched in low complexity. The interval 394 to 415 (SSPSMRPDVSSPPSSSSTATTG) is disordered. Position 404 is a phosphoserine (serine 404). A Glycyl lysine isopeptide (Lys-Gly) (interchain with G-Cter in ubiquitin) cross-link involves residue lysine 419. 2 NR C4-type zinc fingers span residues 421–441 (CLVC…CGSC) and 457–481 (CAGR…YRKC). A DNA-binding region (nuclear receptor) is located at residues 421 to 486 (CLVCSDEASG…RYRKCLQAGM (66 aa)). An N6-acetyllysine mark is found at lysine 480, lysine 492, lysine 494, and lysine 495. The tract at residues 485 to 777 (GMNLEARKTK…NIRKLLFHQK (293 aa)) is interaction with CLOCK. The interval 487–523 (NLEARKTKKKIKGIQQATTGVSQETSENPANKTIVPA) is hinge. Positions 524-758 (TLPQLTPTLV…FPEMLAEIIT (235 aa)) constitute an NR LBD domain. Positions 532–697 (LVSLLEVIEP…EIRMTYIKEL (166 aa)) are interaction with CRY1. Lysine 703 is covalently cross-linked (Glycyl lysine isopeptide (Lys-Gly) (interchain with G-Cter in SUMO)).

It belongs to the nuclear hormone receptor family. NR3 subfamily. As to quaternary structure, heteromultimeric cytoplasmic complex with HSP90AA1, HSPA1A/HSPA1B, and FKBP5 or another immunophilin such as PPID, STIP1, or the immunophilin homolog PPP5C. Upon ligand binding FKBP5 dissociates from the complex and FKBP4 takes its place, thereby linking the complex to dynein and mediating transport to the nucleus, where the complex dissociates. Probably forms a complex composed of chaperones HSP90 and HSP70, co-chaperones CDC37, PPP5C, TSC1 and client protein TSC2, CDK4, AKT, RAF1 and NR3C1; this complex does not contain co-chaperones STIP1/HOP and PTGES3/p23. Directly interacts with UNC45A. Binds to DNA as a homodimer, and as heterodimer with NR3C2 or the retinoid X receptor. Binds STAT5A and STAT5B homodimers and heterodimers. Interacts with NRIP1, POU2F1, POU2F2 and TRIM28. Interacts with several coactivator complexes, including the SMARCA4 complex, CREBBP/EP300, TADA2L (Ada complex) and p160 coactivators such as NCOA2 and NCOA6. Interaction with BAG1 inhibits transactivation. Interacts with HEXIM1 and TGFB1I1. Interacts with NCOA1. Interacts with NCOA3, SMARCA4, SMARCC1, SMARCD1, and SMARCE1. Interacts with CLOCK, CRY1 and CRY2 in a ligand-dependent fashion. Interacts with CIART. Interacts with RWDD3. Interacts with UBE2I/UBC9 and this interaction is enhanced in the presence of RWDD3. Interacts with GRIP1. Interacts with NR4A3 (via nuclear receptor DNA-binding domain), represses transcription activity of NR4A3 on the POMC promoter Nur response element (NurRE). Directly interacts with PNRC2 to attract and form a complex with UPF1 and DCP1A; the interaction leads to rapid mRNA degradation. Interacts with GSK3B. Interacts with FNIP1 and FNIP2. Interacts (via C-terminus) with HNRNPU (via C-terminus). Interacts with MCM3AP. Interacts (via domain NR LBD) with HSP90AA1 and HSP90AB1. In the absence of hormonal ligand, interacts with TACC1. Interacts (via NR LBD domain) with ZNF764 (via KRAB domain); the interaction regulates transcription factor activity of NR3C1 by directing its actions toward certain biologic pathways. In terms of processing, acetylation by CLOCK reduces its binding to glucocorticoid response elements and its transcriptional activity. Increased proteasome-mediated degradation in response to glucocorticoids. Post-translationally, phosphorylated in the absence of hormone; becomes hyperphosphorylated in the presence of glucocorticoid. The Ser-203, Ser-226 and Ser-404-phosphorylated forms are mainly cytoplasmic, and the Ser-211-phosphorylated form is nuclear. Phosphorylation at Ser-211 increases transcriptional activity. Phosphorylation at Ser-203, Ser-226 and Ser-404 decreases signaling capacity. Phosphorylation at Ser-404 may protect from glucocorticoid-induced apoptosis. Phosphorylation at Ser-203 and Ser-211 is not required in regulation of chromosome segregation. May be dephosphorylated by PPP5C, attenuates NR3C1 action. In terms of processing, ubiquitinated by UBR5, leading to its degradation: UBR5 specifically recognizes and binds ligand-bound NR3C1 when it is not associated with coactivators (NCOAs). In presence of NCOAs, the UBR5-degron is not accessible, preventing its ubiquitination and degradation. Sumoylation at Lys-277 and Lys-293 negatively regulates its transcriptional activity. Sumoylation at Lys-703 positively regulates its transcriptional activity in the presence of RWDD3. Sumoylation at Lys-277 and Lys-293 is dispensable whereas sumoylation at Lys-703 is critical for the stimulatory effect of RWDD3 on its transcriptional activity. Heat shock increases sumoylation in a RWDD3-dependent manner.

It localises to the cytoplasm. It is found in the nucleus. Its subcellular location is the mitochondrion. The protein localises to the cytoskeleton. The protein resides in the spindle. It localises to the microtubule organizing center. It is found in the centrosome. Its subcellular location is the chromosome. The protein localises to the nucleoplasm. Receptor for glucocorticoids (GC). Has a dual mode of action: as a transcription factor that binds to glucocorticoid response elements (GRE), both for nuclear and mitochondrial DNA, and as a modulator of other transcription factors. Affects inflammatory responses, cellular proliferation and differentiation in target tissues. Involved in chromatin remodeling. Plays a role in rapid mRNA degradation by binding to the 5' UTR of target mRNAs and interacting with PNRC2 in a ligand-dependent manner which recruits the RNA helicase UPF1 and the mRNA-decapping enzyme DCP1A, leading to RNA decay. Could act as a coactivator for STAT5-dependent transcription upon growth hormone (GH) stimulation and could reveal an essential role of hepatic GR in the control of body growth. Mediates glucocorticoid-induced apoptosis. Promotes accurate chromosome segregation during mitosis. May act as a tumor suppressor. May play a negative role in adipogenesis through the regulation of lipolytic and antilipogenic gene expression. In Saguinus oedipus (Cotton-top tamarin), this protein is Glucocorticoid receptor (NR3C1).